A 121-amino-acid chain; its full sequence is U15-barytoxin-Tl1b (121 aa).

A signal peptide spans 1 to 16 (MKLFMVLVASFAFAVA). 4 disulfide bridges follow: cysteine 54–cysteine 72, cysteine 65–cysteine 78, cysteine 69–cysteine 119, and cysteine 71–cysteine 90.

The protein belongs to the neurotoxin 03 (Tx2) family. 03 subfamily. Expressed by the venom gland.

Its subcellular location is the secreted. In terms of biological role, ion channel inhibitor. In Trittame loki (Brush-footed trapdoor spider), this protein is U15-barytoxin-Tl1b.